The primary structure comprises 402 residues: MTGIIHSLLDTDLYKFTMLQVVLHQFPQTHSLYEFRCRNVSTVYPLADIREDLEAELDALCRLRFTHDELGYLRSLRFIKSDFVDYLELFQLQRRFVEVGTDDKGRLNIRIEGPMIQAMFFEIFILAIVNELYFRRLETPAVIEEGERRLQAKAARLKEIAAAQNPDEPPFLISDFGTRRRYKLAWQEHVIRTLLEAAPSIVRGTSNVYLAKKLGITPIGTMAHEFLQAFQALDVRLRNFQKAALESWVHEYRGDLGVALTDVVGMDAFLRDFDLYFAKLFDGLRHDSGDPYVWGDKAYAHYQKLKIDSRTKMLTFSDGLDIERSWALHQYFKGRFKTGFGIGTNLTNDMGHTPLNIVLKLVECNGQSVAKLSDSPGKTMTNNSTFLAYLRQVFGIPEPRTP.

Phosphohistidine; by autocatalysis is present on H224.

The protein belongs to the NAPRTase family. Post-translationally, transiently phosphorylated on a His residue during the reaction cycle. Phosphorylation strongly increases the affinity for substrates and increases the rate of nicotinate D-ribonucleotide production. Dephosphorylation regenerates the low-affinity form of the enzyme, leading to product release.

The enzyme catalyses nicotinate + 5-phospho-alpha-D-ribose 1-diphosphate + ATP + H2O = nicotinate beta-D-ribonucleotide + ADP + phosphate + diphosphate. It functions in the pathway cofactor biosynthesis; NAD(+) biosynthesis; nicotinate D-ribonucleotide from nicotinate: step 1/1. Catalyzes the synthesis of beta-nicotinate D-ribonucleotide from nicotinate and 5-phospho-D-ribose 1-phosphate at the expense of ATP. This is Nicotinate phosphoribosyltransferase from Neisseria gonorrhoeae (strain ATCC 700825 / FA 1090).